We begin with the raw amino-acid sequence, 51 residues long: Small ribosomal subunit protein eS31 (51 aa).

Zn(2+) is bound by residues cysteine 22, cysteine 25, cysteine 40, and cysteine 43. Residues 22–43 form a C4-type zinc finger; sequence CVRCSHGIFMADHGDRYACGRC.

It belongs to the eukaryotic ribosomal protein eS31 family. As to quaternary structure, part of the 30S ribosomal subunit. Zn(2+) serves as cofactor.

The chain is Small ribosomal subunit protein eS31 from Methanosphaera stadtmanae (strain ATCC 43021 / DSM 3091 / JCM 11832 / MCB-3).